The primary structure comprises 107 residues: Putative double-stranded DNA mimic protein HI_1450 (107 aa).

Belongs to the putative dsDNA mimic protein family. Monomer in solution. Interacts with the DNA-binding protein HU.

In terms of biological role, may act as a double-stranded DNA (dsDNA) mimic. Probably regulates the activity of the DNA-binding protein HU. The sequence is that of Putative double-stranded DNA mimic protein HI_1450 from Haemophilus influenzae (strain ATCC 51907 / DSM 11121 / KW20 / Rd).